The chain runs to 472 residues: Bone morphogenetic protein 3 (472 aa).

Residues 1-22 (MAGASRLLFLWLGCFCVSLAQG) form the signal peptide. Residues 23-362 (ERPKPPFPEL…EQTLKKARRK (340 aa)) constitute a propeptide that is removed on maturation. Residues 27–37 (PPFPELRKAVP) show a composition bias toward basic and acidic residues. Residues 27–53 (PPFPELRKAVPGDRTAGGGPDSELQPQ) form a disordered region. Asn-117, Asn-141, Asn-175, and Asn-220 each carry an N-linked (GlcNAc...) asparagine glycan. The tract at residues 320 to 350 (PYKTLQAQAPEKSKNKKKQRKGPHRKSQTLQ) is disordered. Over residues 333–346 (KNKKKQRKGPHRKS) the composition is skewed to basic residues. Disulfide bonds link Cys-370–Cys-437, Cys-399–Cys-469, and Cys-403–Cys-471. An N-linked (GlcNAc...) asparagine glycan is attached at Asn-463.

This sequence belongs to the TGF-beta family. As to quaternary structure, homodimer; disulfide-linked. Interacts with type II receptor ACVR2B. In terms of tissue distribution, expressed in adult and fetal cartilage.

The protein resides in the secreted. Functionally, growth factor of the TGF-beta superfamily that plays an essential role in developmental process by inducing and patterning early skeletal formation and by negatively regulating bone density. Antagonizes the ability of certain osteogenic BMPs to induce osteoprogenitor differentiation and ossification. Initiates signaling cascades by associating with type II receptor ACVR2B to activate SMAD2-dependent and SMAD-independent signaling cascades including TAK1 and JNK pathways. This chain is Bone morphogenetic protein 3 (BMP3), found in Homo sapiens (Human).